The sequence spans 327 residues: Transaldolase (327 aa).

The active-site Schiff-base intermediate with substrate is Lys132.

It belongs to the transaldolase family. Type 1 subfamily.

It is found in the cytoplasm. It catalyses the reaction D-sedoheptulose 7-phosphate + D-glyceraldehyde 3-phosphate = D-erythrose 4-phosphate + beta-D-fructose 6-phosphate. The protein operates within carbohydrate degradation; pentose phosphate pathway; D-glyceraldehyde 3-phosphate and beta-D-fructose 6-phosphate from D-ribose 5-phosphate and D-xylulose 5-phosphate (non-oxidative stage): step 2/3. Its function is as follows. Transaldolase is important for the balance of metabolites in the pentose-phosphate pathway. This Chlamydia muridarum (strain MoPn / Nigg) protein is Transaldolase.